A 272-amino-acid chain; its full sequence is Exosome complex component MTR3 (272 aa).

Positions 1-36 (MPGDHRRIRGPEESQPPQLYAADEEEAPGTRDPTRL) are disordered.

The protein belongs to the RNase PH family. Component of the RNA exosome core complex (Exo-9), composed of EXOSC1, EXOSC2, EXOSC3, EXOSC4, EXOSC5, EXOSC6, EXOSC7, EXOSC8 and EXOSC9; within the complex interacts with EXOSC1, EXOSC7 and EXOSC8. The catalytically inactive Exo-9 may associate with the catalytic subunit EXOSC10/RRP6. Exo-9 may associate with DIS3 to form the nucleolar exosome complex, or DIS3L to form the cytoplasmic exosome complex. Exo-9 is formed by a hexameric base ring consisting of the heterodimers EXOSC4-EXOSC9, EXOSC5-EXOSC8 and EXOSC6-EXOSC7, and a cap ring consisting of EXOSC1, EXOSC2 and EXOSC3. The RNA exosome complex associates with cofactors EXOSC10/RRP6, C1D/RRP47, MPHOSPH6/MPP6 and MTREX/MTR4.

It localises to the cytoplasm. The protein localises to the nucleus. Its subcellular location is the nucleolus. Non-catalytic component of the RNA exosome complex which has 3'-&gt;5' exoribonuclease activity and participates in a multitude of cellular RNA processing and degradation events. In the nucleus, the RNA exosome complex is involved in proper maturation of stable RNA species such as rRNA, snRNA and snoRNA, in the elimination of RNA processing by-products and non-coding 'pervasive' transcripts, such as antisense RNA species and promoter-upstream transcripts (PROMPTs), and of mRNAs with processing defects, thereby limiting or excluding their export to the cytoplasm. The RNA exosome may be involved in Ig class switch recombination (CSR) and/or Ig variable region somatic hypermutation (SHM) by targeting AICDA deamination activity to transcribed dsDNA substrates. In the cytoplasm, the RNA exosome complex is involved in general mRNA turnover and specifically degrades inherently unstable mRNAs containing AU-rich elements (AREs) within their 3' untranslated regions, and in RNA surveillance pathways, preventing translation of aberrant mRNAs. It seems to be involved in degradation of histone mRNA. The catalytic inactive RNA exosome core complex of 9 subunits (Exo-9) is proposed to play a pivotal role in the binding and presentation of RNA for ribonucleolysis, and to serve as a scaffold for the association with catalytic subunits and accessory proteins or complexes. The chain is Exosome complex component MTR3 (EXOSC6) from Homo sapiens (Human).